The following is a 357-amino-acid chain: Protein RecA (357 aa).

67-74 (GPESSGKT) serves as a coordination point for ATP. Residues 332-357 (PSAMSSSSSDDENSEGNVDFETGEVF) form a disordered region.

The protein belongs to the RecA family.

It is found in the cytoplasm. Can catalyze the hydrolysis of ATP in the presence of single-stranded DNA, the ATP-dependent uptake of single-stranded DNA by duplex DNA, and the ATP-dependent hybridization of homologous single-stranded DNAs. It interacts with LexA causing its activation and leading to its autocatalytic cleavage. This is Protein RecA from Shewanella sp. (strain ANA-3).